Reading from the N-terminus, the 403-residue chain is S-adenosylmethionine synthase (403 aa).

His16 lines the ATP pocket. Asp18 provides a ligand contact to Mg(2+). Glu44 is a K(+) binding site. Residues Glu57 and Gln110 each coordinate L-methionine. Positions 110 to 120 are flexible loop; the sequence is QSAHIAQGVDA. ATP contacts are provided by residues 175 to 177, Asp253, 259 to 260, Ala276, and Lys280; these read DSK and RK. Residue Asp253 participates in L-methionine binding. Lys284 is an L-methionine binding site.

It belongs to the AdoMet synthase family. Homotetramer; dimer of dimers. It depends on Mg(2+) as a cofactor. Requires K(+) as cofactor.

The protein resides in the cytoplasm. The enzyme catalyses L-methionine + ATP + H2O = S-adenosyl-L-methionine + phosphate + diphosphate. Its pathway is amino-acid biosynthesis; S-adenosyl-L-methionine biosynthesis; S-adenosyl-L-methionine from L-methionine: step 1/1. Functionally, catalyzes the formation of S-adenosylmethionine (AdoMet) from methionine and ATP. The overall synthetic reaction is composed of two sequential steps, AdoMet formation and the subsequent tripolyphosphate hydrolysis which occurs prior to release of AdoMet from the enzyme. This Erythrobacter litoralis (strain HTCC2594) protein is S-adenosylmethionine synthase.